The following is a 913-amino-acid chain: Protein translocase subunit SecA (913 aa).

ATP contacts are provided by residues glutamine 87, 105-109 (GEGKT), and aspartate 512. Residues cysteine 897, cysteine 899, cysteine 908, and histidine 909 each contribute to the Zn(2+) site.

The protein belongs to the SecA family. Monomer and homodimer. Part of the essential Sec protein translocation apparatus which comprises SecA, SecYEG and auxiliary proteins SecDF-YajC and YidC. Zn(2+) is required as a cofactor.

The protein localises to the cell inner membrane. It localises to the cytoplasm. The enzyme catalyses ATP + H2O + cellular proteinSide 1 = ADP + phosphate + cellular proteinSide 2.. Part of the Sec protein translocase complex. Interacts with the SecYEG preprotein conducting channel. Has a central role in coupling the hydrolysis of ATP to the transfer of proteins into and across the cell membrane, serving both as a receptor for the preprotein-SecB complex and as an ATP-driven molecular motor driving the stepwise translocation of polypeptide chains across the membrane. The protein is Protein translocase subunit SecA of Pseudomonas savastanoi pv. phaseolicola (strain 1448A / Race 6) (Pseudomonas syringae pv. phaseolicola (strain 1448A / Race 6)).